The primary structure comprises 383 residues: Photosynthetic reaction center cytochrome c subunit (383 aa).

A signal peptide spans 1-22; the sequence is MNLGKQLTLPAVAVVASVVLLG. The N-palmitoyl cysteine moiety is linked to residue Cys-23. The S-diacylglycerol cysteine moiety is linked to residue Cys-23. The heme site is built by Met-94, Cys-107, Cys-110, His-111, Met-130, His-144, Cys-152, Cys-155, His-156, Met-236, Cys-247, Cys-250, His-251, Cys-307, Cys-310, and His-311. A disordered region spans residues 335–383; it reads PAEAAPATEEAPAAEAEAVEAAPVEEAAPAPVEQAAAPVEDAAPAPQQL.

As to quaternary structure, component of the photosynthetic reaction center composed of protein subunits L (PufL), M (PufM), H (PuhA) and cytochrome C (PufC). The reaction center interacts with light-harvesting antenna complex LH1. In terms of processing, binds 4 heme groups per subunit.

Its subcellular location is the cellular chromatophore membrane. Its function is as follows. The reaction center of purple bacteria contains a tightly bound cytochrome molecule which re-reduces the photo oxidized primary electron donor. The polypeptide is Photosynthetic reaction center cytochrome c subunit (pufC) (Allochromatium vinosum (strain ATCC 17899 / DSM 180 / NBRC 103801 / NCIMB 10441 / D) (Chromatium vinosum)).